The primary structure comprises 246 residues: Probable transcriptional regulatory protein BVU_3469 (246 aa).

This sequence belongs to the TACO1 family.

Its subcellular location is the cytoplasm. The sequence is that of Probable transcriptional regulatory protein BVU_3469 from Phocaeicola vulgatus (strain ATCC 8482 / DSM 1447 / JCM 5826 / CCUG 4940 / NBRC 14291 / NCTC 11154) (Bacteroides vulgatus).